Consider the following 177-residue polypeptide: MSMITSMLGRKQNAQQKGGGGGGRTGGGGGGEIEPVSVDIMEPFMDAISLTAFAAAPSAAAAAAGVPSTASMDWKETAAAHVFMADMPGVRREEVRVEVEEEKVLRISGQRARAAEEKGERWHRVERSSERFVRTVRLPPNANTDGVHAALDNGVLTITIPKDNDRKPHARIIPITN.

Positions 1-35 (MSMITSMLGRKQNAQQKGGGGGGRTGGGGGGEIEP) are disordered. Gly residues predominate over residues 17–32 (KGGGGGGRTGGGGGGE). In terms of domain architecture, sHSP spans 63–177 (AAGVPSTASM…PHARIIPITN (115 aa)).

This sequence belongs to the small heat shock protein (HSP20) family. In terms of assembly, may form oligomeric structures.

It localises to the cytoplasm. The chain is 18.9 kDa heat shock protein (HSP18.9) from Oryza sativa subsp. japonica (Rice).